A 2182-amino-acid polypeptide reads, in one-letter code: Autophagy-related protein 2 (2182 aa).

Disordered regions lie at residues 291 to 375 (SPSL…PLAD), 392 to 426 (EQDY…ATPR), 523 to 630 (YTHE…STTL), 663 to 682 (DIDP…VATP), 736 to 758 (GAFS…SSVE), and 793 to 816 (DKKP…SKET). 2 stretches are compositionally biased toward polar residues: residues 303 to 313 (NPPSRQATELS) and 322 to 331 (VSSSQASIRS). Residues 332–347 (NEPESASHHSLPENDH) show a composition bias toward basic and acidic residues. 2 stretches are compositionally biased toward acidic residues: residues 528–540 (AENE…EQTT) and 613–624 (WDDDYDDPEEEP). Residues 745 to 758 (HAQQRSSQGTSSVE) are compositionally biased toward polar residues. The segment covering 793–813 (DKKPSPAEGSKQDTASKDAPS) has biased composition (basic and acidic residues).

Belongs to the ATG2 family. Interacts with ATG18.

It localises to the preautophagosomal structure membrane. The protein resides in the endoplasmic reticulum membrane. It carries out the reaction a 1,2-diacyl-sn-glycero-3-phosphocholine(in) = a 1,2-diacyl-sn-glycero-3-phosphocholine(out). The enzyme catalyses a 1,2-diacyl-sn-glycero-3-phospho-L-serine(in) = a 1,2-diacyl-sn-glycero-3-phospho-L-serine(out). The catalysed reaction is a 1,2-diacyl-sn-glycero-3-phosphoethanolamine(in) = a 1,2-diacyl-sn-glycero-3-phosphoethanolamine(out). Its function is as follows. Lipid transfer protein required for autophagosome completion and peroxisome degradation and peroxisome degradation. Tethers the edge of the isolation membrane (IM) to the endoplasmic reticulum (ER) and mediates direct lipid transfer from ER to IM for IM expansion. ATG2 binds to the ER exit site (ERES), which is the membrane source for autophagosome formation, using basic residues in its N-terminal region (NR) and to the expanding edge of the IM through its C-terminal region. The latter binding is assisted by an ATG18-PtdIns3P interaction. ATG2 then extracts phospholipids from the membrane source using its NR and transfers them to ATG9 to the IM through its predicted beta-sheet-rich structure for membrane expansion. Autophagy is required for proper vegetative growth, asexual/sexual reproduction, and full virulence. Autophagy is particularly involved in the biosynthesis of deoxynivalenol (DON), an important virulence determinant. The sequence is that of Autophagy-related protein 2 from Gibberella zeae (strain ATCC MYA-4620 / CBS 123657 / FGSC 9075 / NRRL 31084 / PH-1) (Wheat head blight fungus).